We begin with the raw amino-acid sequence, 387 residues long: MSAFDPGQPQHLGIEEEYLLTDLQSRCMVAEPPPEVLRDCREALGQNFAYEMFQGQIEVASPVFDHSAQAGAYLRQVRSALDQALASHGLGFICAGSHPLADWHEQRATPQAHFRQLFNEFALAARRSVLSGLHVHAQVPAAVDRIAVMNEVLPWTPLLLALSLSSPFWQGHDSGYLSYRQVACDEWPRMGIPEYLHDHQAFDDYLRLLRGIGALGAEDNAWWGIRPALRYPTLELRMTDACPRVADAQTLAGLFAVMVRHACLLPAAGSQYTQAQRWLLKENRVQARRRGAQGRYLMSPDQAPMNLGQWLELAEQVFGDTAQALGEEPLFERARQLLRGGCSAERQLSCHAAQPAESDREARCRAVVDLLLWESRDSEPESTNAPP.

Belongs to the glutamate--cysteine ligase type 2 family. YbdK subfamily.

It carries out the reaction L-cysteine + L-glutamate + ATP = gamma-L-glutamyl-L-cysteine + ADP + phosphate + H(+). Its function is as follows. ATP-dependent carboxylate-amine ligase which exhibits weak glutamate--cysteine ligase activity. The polypeptide is Putative glutamate--cysteine ligase 2 (Pseudomonas fluorescens (strain ATCC BAA-477 / NRRL B-23932 / Pf-5)).